We begin with the raw amino-acid sequence, 354 residues long: Uroporphyrinogen decarboxylase (354 aa).

Substrate-binding positions include Arg-27–Arg-31, Asp-77, Tyr-154, Ser-209, and His-327.

The protein belongs to the uroporphyrinogen decarboxylase family. In terms of assembly, homodimer.

It is found in the cytoplasm. The enzyme catalyses uroporphyrinogen III + 4 H(+) = coproporphyrinogen III + 4 CO2. It participates in porphyrin-containing compound metabolism; protoporphyrin-IX biosynthesis; coproporphyrinogen-III from 5-aminolevulinate: step 4/4. Catalyzes the decarboxylation of four acetate groups of uroporphyrinogen-III to yield coproporphyrinogen-III. This Shewanella baltica (strain OS223) protein is Uroporphyrinogen decarboxylase.